The chain runs to 287 residues: Undecaprenyl-diphosphatase (287 aa).

7 helical membrane passes run Leu6–Val26, Ser45–Phe65, Ala85–Ile105, Val111–Trp131, Ala204–Leu224, Ala238–Leu258, and Thr265–Met285.

Belongs to the UppP family.

Its subcellular location is the cell inner membrane. It carries out the reaction di-trans,octa-cis-undecaprenyl diphosphate + H2O = di-trans,octa-cis-undecaprenyl phosphate + phosphate + H(+). Functionally, catalyzes the dephosphorylation of undecaprenyl diphosphate (UPP). Confers resistance to bacitracin. In Bordetella petrii (strain ATCC BAA-461 / DSM 12804 / CCUG 43448), this protein is Undecaprenyl-diphosphatase.